The chain runs to 444 residues: Tol-Pal system protein TolB (444 aa).

The signal sequence occupies residues 1 to 19 (MRNIIYFILLLLFSFKGYA).

The protein belongs to the TolB family. As to quaternary structure, the Tol-Pal system is composed of five core proteins: the inner membrane proteins TolA, TolQ and TolR, the periplasmic protein TolB and the outer membrane protein Pal. They form a network linking the inner and outer membranes and the peptidoglycan layer.

It is found in the periplasm. Part of the Tol-Pal system, which plays a role in outer membrane invagination during cell division and is important for maintaining outer membrane integrity. This Rickettsia akari (strain Hartford) protein is Tol-Pal system protein TolB.